A 161-amino-acid polypeptide reads, in one-letter code: Small ribosomal subunit protein uS9 (161 aa).

Disordered regions lie at residues 1–27 and 142–161; these read MAQI…APKA and KERK…FSKR.

It belongs to the universal ribosomal protein uS9 family.

The sequence is that of Small ribosomal subunit protein uS9 from Clavibacter michiganensis subsp. michiganensis (strain NCPPB 382).